Reading from the N-terminus, the 470-residue chain is Serine hydroxymethyltransferase, cytosolic (470 aa).

Over residues 1 to 11 (MSAYALSQSHR) the composition is skewed to polar residues. The segment at 1–23 (MSAYALSQSHRQLTEGHLKDTDP) is disordered. Ser2 bears the N-acetylserine mark. The span at 12-23 (QLTEGHLKDTDP) shows a compositional bias: basic and acidic residues. The residue at position 249 (Lys249) is an N6-(pyridoxal phosphate)lysine.

The protein belongs to the SHMT family. Homotetramer. Requires pyridoxal 5'-phosphate as cofactor.

The protein localises to the cytoplasm. The catalysed reaction is (6R)-5,10-methylene-5,6,7,8-tetrahydrofolate + glycine + H2O = (6S)-5,6,7,8-tetrahydrofolate + L-serine. It functions in the pathway one-carbon metabolism; tetrahydrofolate interconversion. In terms of biological role, interconversion of serine and glycine. This chain is Serine hydroxymethyltransferase, cytosolic (SHM2), found in Candida albicans (strain SC5314 / ATCC MYA-2876) (Yeast).